The primary structure comprises 49 residues: Soritesidine (49 aa).

Its subcellular location is the secreted. Very potent toxin that exhibits a wide range of toxicities over various organisms and cells including brine shrimp larvae (Artemia salina), sea hare eggs (Aplysia kurodai), mice, and cultured mammalian cells. An SOR-containing fraction cleaves plasmid DNA in a bivalent metal ion dependent manner suggesting genotoxicity of SOR. The polypeptide is Soritesidine (Spongosorites sp. (strain QM G324170) (Okinawan marine Sponge)).